Here is a 1075-residue protein sequence, read N- to C-terminus: DNA-directed RNA polymerase subunit beta (1075 aa).

This sequence belongs to the RNA polymerase beta chain family. In terms of assembly, in plastids the minimal PEP RNA polymerase catalytic core is composed of four subunits: alpha, beta, beta', and beta''. When a (nuclear-encoded) sigma factor is associated with the core the holoenzyme is formed, which can initiate transcription.

The protein resides in the plastid. The protein localises to the chloroplast. The enzyme catalyses RNA(n) + a ribonucleoside 5'-triphosphate = RNA(n+1) + diphosphate. Its function is as follows. DNA-dependent RNA polymerase catalyzes the transcription of DNA into RNA using the four ribonucleoside triphosphates as substrates. This chain is DNA-directed RNA polymerase subunit beta, found in Oryza sativa (Rice).